A 308-amino-acid chain; its full sequence is Aldo-keto reductase AKR2E4 (308 aa).

NADP(+) contacts are provided by residues 22 to 29 and D53; that span reads GTGRGTAK. The active-site Proton donor is the Y58. Residues 158–159, R215, and 259–269 contribute to the NADP(+) site; these read SN and KSTNKQRIAQN.

This sequence belongs to the short-chain dehydrogenases/reductases (SDR) family. As to expression, detected in hemolymph (at protein level). Detected in larval ovary.

Subject to substrate inhibition by high levels of 3-dehydroecdysone. Functionally, NADP-dependent oxidoreductase with high 3-dehydroecdysone reductase activity. May play a role in the regulation of molting. Has lower activity with phenylglyoxal and isatin (in vitro). Has no activity with NADH as cosubstrate. Has no activity with nitrobenzaldehyde and 3-hydroxybenzaldehyde. This is Aldo-keto reductase AKR2E4 (akr2e) from Bombyx mori (Silk moth).